We begin with the raw amino-acid sequence, 89 residues long: Small ribosomal subunit protein uS15 (89 aa).

Belongs to the universal ribosomal protein uS15 family. As to quaternary structure, part of the 30S ribosomal subunit. Forms a bridge to the 50S subunit in the 70S ribosome, contacting the 23S rRNA.

In terms of biological role, one of the primary rRNA binding proteins, it binds directly to 16S rRNA where it helps nucleate assembly of the platform of the 30S subunit by binding and bridging several RNA helices of the 16S rRNA. Functionally, forms an intersubunit bridge (bridge B4) with the 23S rRNA of the 50S subunit in the ribosome. The chain is Small ribosomal subunit protein uS15 from Mycobacterium avium (strain 104).